We begin with the raw amino-acid sequence, 452 residues long: GTPase Der (452 aa).

EngA-type G domains are found at residues 9–170 (KIIA…PEED) and 185–362 (LQIV…KTWN). GTP contacts are provided by residues 15 to 22 (GRPNVGKS), 62 to 66 (DTPGF), 124 to 127 (NKCE), 191 to 198 (GRPNAGKS), 238 to 242 (DTAGL), and 303 to 306 (NKWD). The KH-like domain maps to 363 to 448 (KKITTSKLNE…PIRFNYIKTK (86 aa)).

The protein belongs to the TRAFAC class TrmE-Era-EngA-EngB-Septin-like GTPase superfamily. EngA (Der) GTPase family. Associates with the 50S ribosomal subunit.

Its function is as follows. GTPase that plays an essential role in the late steps of ribosome biogenesis. The polypeptide is GTPase Der (Rickettsia bellii (strain OSU 85-389)).